The following is an 822-amino-acid chain: Sushi domain-containing protein 2 (822 aa).

The signal sequence occupies residues 1-27 (MKPALLPWALLLLATALGPGPGPTADA). One can recognise an SMB domain in the interval 28 to 66 (QESCSMRCGALDGPCSCHPTCSGLGTCCLDFRDFCLEIL). At 28–785 (QESCSMRCGA…PKCQPGRSYA (758 aa)) the chain is on the extracellular side. Cystine bridges form between Cys31–Cys35, Cys31–Cys44, Cys35–Cys62, Cys42–Cys44, Cys42–Cys55, Cys48–Cys54, and Cys55–Cys62. 2 N-linked (GlcNAc...) asparagine glycosylation sites follow: Asn162 and Asn177. Residues 285–433 (PVAWARTQCQ…PDCPRYMQRR (149 aa)) form the AMOP domain. Positions 445 to 639 (RLASAFGDPH…NWTVHNASSL (195 aa)) constitute a VWFD domain. The N-linked (GlcNAc...) asparagine glycan is linked to Asn522. In terms of domain architecture, Sushi spans 723-780 (VSCGWLAPPPNGQKEGNRYLAGSTIYFHCDNGYSLAGAETSTCQADGTWSSPTPKCQP). Disulfide bonds link Cys725/Cys765 and Cys751/Cys778. Residues 786–806 (VLLGIIFGGLAVVAAVALVYV) form a helical membrane-spanning segment. Topologically, residues 807–822 (LLRRRKGNTHVWGAQP) are cytoplasmic.

In terms of assembly, interacts with LGALS1; leads to an increased amount of LGALS1 on the cell surface. Interacts with GPR15LG; the interaction is direct. In terms of tissue distribution, highly expressed in breast cancer, but shows a restricted expression pattern in normal tissues such as adipose, adrenal gland, kidney, lung, mammary gland, placenta, thyroid, trachea, and uterus. Also expressed in colon; down-regulated in colon cancer tissues.

It localises to the cell membrane. Its function is as follows. May be a cytokine receptor for GPR15LG. May be a tumor suppressor; together with GPR15LG has a growth inhibitory effect on colon cancer cells which includes G1 cell cycle arrest. May play a role in breast tumorigenesis. This is Sushi domain-containing protein 2 (SUSD2) from Homo sapiens (Human).